The chain runs to 168 residues: Acetolactate synthase small subunit (168 aa).

One can recognise an ACT domain in the interval 7 to 82; that stretch reads TLSVLVEDKP…VIKIVEQDDE (76 aa).

This sequence belongs to the acetolactate synthase small subunit family. In terms of assembly, dimer of large and small chains.

The catalysed reaction is 2 pyruvate + H(+) = (2S)-2-acetolactate + CO2. It participates in amino-acid biosynthesis; L-isoleucine biosynthesis; L-isoleucine from 2-oxobutanoate: step 1/4. It functions in the pathway amino-acid biosynthesis; L-valine biosynthesis; L-valine from pyruvate: step 1/4. The protein is Acetolactate synthase small subunit (ilvH) of Mycobacterium bovis (strain ATCC BAA-935 / AF2122/97).